The sequence spans 161 residues: Endoribonuclease YbeY (161 aa).

Zn(2+)-binding residues include His-121, His-125, and His-131.

It belongs to the endoribonuclease YbeY family. Zn(2+) serves as cofactor.

It localises to the cytoplasm. Single strand-specific metallo-endoribonuclease involved in late-stage 70S ribosome quality control and in maturation of the 3' terminus of the 16S rRNA. The polypeptide is Endoribonuclease YbeY (Stenotrophomonas maltophilia (strain K279a)).